The sequence spans 119 residues: Hydrogenase maturation factor HypA (119 aa).

A Ni(2+)-binding site is contributed by H2. C73, C76, C89, and C92 together coordinate Zn(2+).

This sequence belongs to the HypA/HybF family.

In terms of biological role, involved in the maturation of [NiFe] hydrogenases. Required for nickel insertion into the metal center of the hydrogenase. In Dehalococcoides mccartyi (strain ATCC BAA-2100 / JCM 16839 / KCTC 5957 / BAV1), this protein is Hydrogenase maturation factor HypA.